The chain runs to 331 residues: GTP 3',8-cyclase (331 aa).

One can recognise a Radical SAM core domain in the interval 1-231 (MNAVDYLRIS…DGQVQGNGPA (231 aa)). Arginine 8 is a GTP binding site. [4Fe-4S] cluster is bound by residues cysteine 15 and cysteine 19. Tyrosine 21 lines the S-adenosyl-L-methionine pocket. Cysteine 22 contacts [4Fe-4S] cluster. Arginine 60 contributes to the GTP binding site. An S-adenosyl-L-methionine-binding site is contributed by glycine 64. Residue threonine 91 coordinates GTP. Serine 115 contributes to the S-adenosyl-L-methionine binding site. Lysine 157 lines the GTP pocket. Methionine 191 provides a ligand contact to S-adenosyl-L-methionine. The [4Fe-4S] cluster site is built by cysteine 254 and cysteine 257. Position 259-261 (259-261 (RMR)) interacts with GTP. Position 271 (cysteine 271) interacts with [4Fe-4S] cluster.

Belongs to the radical SAM superfamily. MoaA family. In terms of assembly, monomer and homodimer. [4Fe-4S] cluster serves as cofactor.

The enzyme catalyses GTP + AH2 + S-adenosyl-L-methionine = (8S)-3',8-cyclo-7,8-dihydroguanosine 5'-triphosphate + 5'-deoxyadenosine + L-methionine + A + H(+). The protein operates within cofactor biosynthesis; molybdopterin biosynthesis. Catalyzes the cyclization of GTP to (8S)-3',8-cyclo-7,8-dihydroguanosine 5'-triphosphate. The sequence is that of GTP 3',8-cyclase from Acaryochloris marina (strain MBIC 11017).